Reading from the N-terminus, the 382-residue chain is uncharacterized protein (382 aa).

Transmembrane regions (helical) follow at residues 8–28, 41–61, 73–93, 94–114, 133–153, 157–177, 208–228, 235–255, 274–294, 325–345, and 349–369; these read VLLL…LNTL, WQVG…TLIA, SYHC…LTVD, FWSW…IWVI, AAYM…LGIV, LLSV…PLLF, GCII…LYLS, ASVG…QWPM, VVIL…ALFI, ALLM…SLLM, and SDNL…MMLL.

This sequence belongs to the major facilitator superfamily. YcaD (TC 2.A.1.26) family.

Its subcellular location is the cell inner membrane. This is an uncharacterized protein from Yersinia pseudotuberculosis serotype IB (strain PB1/+).